The following is a 415-amino-acid chain: Enolase (415 aa).

Q161 is a (2R)-2-phosphoglycerate binding site. The active-site Proton donor is the E203. 3 residues coordinate Mg(2+): D240, E281, and D308. Positions 333, 362, 363, and 384 each coordinate (2R)-2-phosphoglycerate. K333 functions as the Proton acceptor in the catalytic mechanism.

The protein belongs to the enolase family. The cofactor is Mg(2+).

It is found in the cytoplasm. The protein resides in the secreted. The protein localises to the cell surface. The enzyme catalyses (2R)-2-phosphoglycerate = phosphoenolpyruvate + H2O. It participates in carbohydrate degradation; glycolysis; pyruvate from D-glyceraldehyde 3-phosphate: step 4/5. Catalyzes the reversible conversion of 2-phosphoglycerate (2-PG) into phosphoenolpyruvate (PEP). It is essential for the degradation of carbohydrates via glycolysis. In Campylobacter hominis (strain ATCC BAA-381 / DSM 21671 / CCUG 45161 / LMG 19568 / NCTC 13146 / CH001A), this protein is Enolase.